The primary structure comprises 379 residues: Chaperone protein DnaJ (379 aa).

Residues 5-69 (EYYERLGVDK…QKRAAYDQYG (65 aa)) form the J domain. A CR-type zinc finger spans residues 141–223 (GVEKQVKYNR…CHGSGHEKVA (83 aa)). Positions 154, 157, 171, 174, 197, 200, 211, and 214 each coordinate Zn(2+). CXXCXGXG motif repeat units lie at residues 154–161 (CHTCGGSG), 171–178 (CHKCGGRG), 197–204 (CDVCNGTG), and 211–218 (CETCHGSG).

It belongs to the DnaJ family. Homodimer. Zn(2+) is required as a cofactor.

Its subcellular location is the cytoplasm. In terms of biological role, participates actively in the response to hyperosmotic and heat shock by preventing the aggregation of stress-denatured proteins and by disaggregating proteins, also in an autonomous, DnaK-independent fashion. Unfolded proteins bind initially to DnaJ; upon interaction with the DnaJ-bound protein, DnaK hydrolyzes its bound ATP, resulting in the formation of a stable complex. GrpE releases ADP from DnaK; ATP binding to DnaK triggers the release of the substrate protein, thus completing the reaction cycle. Several rounds of ATP-dependent interactions between DnaJ, DnaK and GrpE are required for fully efficient folding. Also involved, together with DnaK and GrpE, in the DNA replication of plasmids through activation of initiation proteins. The polypeptide is Chaperone protein DnaJ (Lactococcus lactis subsp. lactis (strain IL1403) (Streptococcus lactis)).